Reading from the N-terminus, the 345-residue chain is tRNA N6-adenosine threonylcarbamoyltransferase (345 aa).

H111 and H115 together coordinate Fe cation. Substrate-binding positions include L134–G138, D167, G180, and N276. D304 contacts Fe cation.

This sequence belongs to the KAE1 / TsaD family. Fe(2+) is required as a cofactor.

Its subcellular location is the cytoplasm. It carries out the reaction L-threonylcarbamoyladenylate + adenosine(37) in tRNA = N(6)-L-threonylcarbamoyladenosine(37) in tRNA + AMP + H(+). Functionally, required for the formation of a threonylcarbamoyl group on adenosine at position 37 (t(6)A37) in tRNAs that read codons beginning with adenine. Is involved in the transfer of the threonylcarbamoyl moiety of threonylcarbamoyl-AMP (TC-AMP) to the N6 group of A37, together with TsaE and TsaB. TsaD likely plays a direct catalytic role in this reaction. This is tRNA N6-adenosine threonylcarbamoyltransferase from Bordetella avium (strain 197N).